The sequence spans 322 residues: Lipoyl synthase (322 aa).

The span at 1-12 (MVTVLNTVNQSG) shows a compositional bias: polar residues. Residues 1–22 (MVTVLNTVNQSGRLRHPEKAHR) are disordered. Residues C60, C65, C71, C86, C90, C93, and S299 each contribute to the [4Fe-4S] cluster site. Residues 72-288 (WEKKHATFMI…ETIGKTKGFL (217 aa)) enclose the Radical SAM core domain.

Belongs to the radical SAM superfamily. Lipoyl synthase family. The cofactor is [4Fe-4S] cluster.

It is found in the cytoplasm. The enzyme catalyses [[Fe-S] cluster scaffold protein carrying a second [4Fe-4S](2+) cluster] + N(6)-octanoyl-L-lysyl-[protein] + 2 oxidized [2Fe-2S]-[ferredoxin] + 2 S-adenosyl-L-methionine + 4 H(+) = [[Fe-S] cluster scaffold protein] + N(6)-[(R)-dihydrolipoyl]-L-lysyl-[protein] + 4 Fe(3+) + 2 hydrogen sulfide + 2 5'-deoxyadenosine + 2 L-methionine + 2 reduced [2Fe-2S]-[ferredoxin]. It functions in the pathway protein modification; protein lipoylation via endogenous pathway; protein N(6)-(lipoyl)lysine from octanoyl-[acyl-carrier-protein]: step 2/2. Catalyzes the radical-mediated insertion of two sulfur atoms into the C-6 and C-8 positions of the octanoyl moiety bound to the lipoyl domains of lipoate-dependent enzymes, thereby converting the octanoylated domains into lipoylated derivatives. This Brucella abortus (strain S19) protein is Lipoyl synthase.